The following is a 177-amino-acid chain: Probable DNA-directed RNA polymerase subunit delta (177 aa).

One can recognise an HTH HARE-type domain in the interval 14–81 (CSMIEVVHSV…GENRWGLRSW (68 aa)). The interval 91–177 (ILPQPKPKKK…DETEEEEEEL (87 aa)) is disordered. The span at 106–177 (DGFDDYIEED…DETEEEEEEL (72 aa)) shows a compositional bias: acidic residues.

It belongs to the RpoE family. In terms of assembly, RNAP is composed of a core of 2 alpha, a beta and a beta' subunits. The core is associated with a delta subunit and one of several sigma factors.

Participates in both the initiation and recycling phases of transcription. In the presence of the delta subunit, RNAP displays an increased specificity of transcription, a decreased affinity for nucleic acids, and an increased efficiency of RNA synthesis because of enhanced recycling. The chain is Probable DNA-directed RNA polymerase subunit delta from Bacillus cereus (strain G9842).